Reading from the N-terminus, the 193-residue chain is Molybdenum cofactor guanylyltransferase (193 aa).

Residues 8–10 (LAG), Lys21, Asp67, and Asp98 contribute to the GTP site. Asp98 provides a ligand contact to Mg(2+).

This sequence belongs to the MobA family. In terms of assembly, monomer. It depends on Mg(2+) as a cofactor.

The protein resides in the cytoplasm. It carries out the reaction Mo-molybdopterin + GTP + H(+) = Mo-molybdopterin guanine dinucleotide + diphosphate. Functionally, transfers a GMP moiety from GTP to Mo-molybdopterin (Mo-MPT) cofactor (Moco or molybdenum cofactor) to form Mo-molybdopterin guanine dinucleotide (Mo-MGD) cofactor. The protein is Molybdenum cofactor guanylyltransferase of Cereibacter sphaeroides (strain ATCC 17029 / ATH 2.4.9) (Rhodobacter sphaeroides).